The chain runs to 132 residues: Agouti-signaling protein (132 aa).

The N-terminal stretch at methionine 1–serine 22 is a signal peptide. N-linked (GlcNAc...) asparagine glycosylation occurs at asparagine 39. The interval histidine 61–threonine 87 is disordered. Basic and acidic residues predominate over residues arginine 64–methionine 79. 5 disulfide bridges follow: cysteine 93–cysteine 108, cysteine 100–cysteine 114, cysteine 107–cysteine 125, cysteine 111–cysteine 132, and cysteine 116–cysteine 123. The 40-residue stretch at cysteine 93–cysteine 132 folds into the Agouti domain.

The protein localises to the secreted. Functionally, involved in the regulation of melanogenesis. The binding of ASP to MC1R precludes alpha-MSH initiated signaling and thus blocks production of cAMP, leading to a down-regulation of eumelanogenesis (brown/black pigment) and thus increasing synthesis of pheomelanin (yellow/red pigment). In Colobus polykomos (Western black-and-white colobus monkey), this protein is Agouti-signaling protein (ASIP).